Reading from the N-terminus, the 279-residue chain is HTH-type transcriptional regulator HdfR (279 aa).

The 58-residue stretch at 1–58 (MDTELLKTFLEVSRTRHFGRAAESLYLTQSAVSFRIRQLENQLGVNLFTRHRNNIRLT) folds into the HTH lysR-type domain. Positions 18–37 (FGRAAESLYLTQSAVSFRIR) form a DNA-binding region, H-T-H motif.

The protein belongs to the LysR transcriptional regulatory family.

Functionally, negatively regulates the transcription of the flagellar master operon flhDC by binding to the upstream region of the operon. In Escherichia coli O6:K15:H31 (strain 536 / UPEC), this protein is HTH-type transcriptional regulator HdfR.